The sequence spans 197 residues: Shikimate kinase (197 aa).

26 to 31 (GSGKSR) is a binding site for ATP. A Mg(2+)-binding site is contributed by S30. Substrate is bound by residues D48, R72, and G94. R132 lines the ATP pocket. Substrate is bound at residue R150.

Belongs to the shikimate kinase family. As to quaternary structure, monomer. Mg(2+) is required as a cofactor.

Its subcellular location is the cytoplasm. It carries out the reaction shikimate + ATP = 3-phosphoshikimate + ADP + H(+). It functions in the pathway metabolic intermediate biosynthesis; chorismate biosynthesis; chorismate from D-erythrose 4-phosphate and phosphoenolpyruvate: step 5/7. Its function is as follows. Catalyzes the specific phosphorylation of the 3-hydroxyl group of shikimic acid using ATP as a cosubstrate. The polypeptide is Shikimate kinase (Prochlorococcus marinus (strain MIT 9211)).